Consider the following 129-residue polypeptide: Dormancy-associated protein 2 (129 aa).

Positions Met-1–Ala-25 are cleaved as a signal peptide. The tract at residues Gly-110–Asn-129 is disordered.

It belongs to the DRM1/ARP family. Expressed in axilary buds. Detected in growing stems, leaflets and floral organs, but not in roots.

The polypeptide is Dormancy-associated protein 2 (Pisum sativum (Garden pea)).